The following is a 1030-amino-acid chain: MSALRVTSPSVEYVQRPLGLDAAHPRLSWPMASAAPGRRQSAYQVRVASSAAGLSHPDVWDSGKVVSDDSVLVPYAGPPLKPRTRYFWSVRVWDADGGASEWSAPSWWETGLMGASQWSAKWISAPAPLTEAPSLEGSSWIWFPEGEPANSAPAATRWFRRTVDLPDDITGATLAISADNVYAVSVDGAEVARTDLEADNEGWRRPAVIDVLDHVHSGNNTLAVSASNASVGPAGWICVLVLTTASGEKKIFSDASWKSTDHEPADGWREPDFDDSGWPAAKVAAAWGAGPWGRVAPVASAANQLRHEFRLPHKKVSRARLYATALGLYEAHLNGRRVGRDQLAPGWTDYRKRVQYQTYDVTSSVRPGANALAAYVAPGWYAGNVGMFGPHQYGERPALLAQLEVEYADGTSERITSGPDWRAASGPIVSADLLSGETYDARKETAGWTSPGFDDRAWLAVRGADNDVPEQIVAQVDGPVRIAKELPARKVTEPKPGVFVLDLGQNMVGSVRLRVSGDAGTTVRLRHAEVLNPDGTIYTANLRSAAATDTYTLKGQGEETYEPRFTFHGFRYVEVTGFPGKPSTTSVTGRVMHTSAPFTFEFETNVPMLNKLHSNITWGQRGNFLSVPTDTPARDERLGWTGDINVFAPTAAYTMESARFLTKWLVDLRDAQTSDGAFTDVAPAVGNLGNGVAGWGDAGVTVPWALYQAYGDRQVLADALPSVHAWLRYLEKHSDGLLRPADGYGDWLNVSDETPKDVIATAYFAHSADLAARMATELGKDAAPYTDLFTRIRKAFQTAYVASDGKVKGDTQSAYVLTLSMNLVPDALRKAAADRLVALIEAKDWHLSTGFLGTPRLLPVLTDTGHTDVAYRLLHQRTFPSWGYPIDKGSTTMWERWDSIQPDGGFQTPEMNSFNHYAYGSVGEWMYANIAGIAPGRAGYRQVVIRPRPGGEVTSARATFASLHGPVSTRWQQRSGGFVLTCSVPPNTTAEVWIPADHPDRVQHTHGTFVRAEDGCAVFEVGSGSHRFTV.

The interval 133–297 is carbohydrate-binding module-67 (CBM67); it reads PSLEGSSWIW…GAGPWGRVAP (165 aa). Residues D179 and N180 each coordinate Ca(2+). Alpha-L-rhamnose contacts are provided by residues 179-180 and W203; that span reads DN. Positions 228 and 233 each coordinate Ca(2+). Alpha-L-rhamnose is bound by residues D630, 634 to 636, D643, and W695; that span reads RDE. E636 acts as the Proton donor in catalysis. E895 (proton acceptor) is an active-site residue. H916 is an alpha-L-rhamnose binding site.

The protein belongs to the glycosyl hydrolase 78 family.

It carries out the reaction Hydrolysis of terminal non-reducing alpha-L-rhamnose residues in alpha-L-rhamnosides.. Alpha-L-rhamnosidase which is able to degrade p-nitrophenyl-alpha-L-rhamnopyranoside (PNP-Rha) in vitro. Releases L-rhamnose from citrus flavonoids such as naringin, rutin and hesperidin, and the arabinogalactan-protein (AGP) gum arabic. AGPs are a family of proteoglycans that are localized on the cell surfaces of higher plants. Cleaves both the alpha-1,6 and the alpha-1,2-linked rhamnosyl residues. The chain is Alpha-L-rhamnosidase from Streptomyces avermitilis (strain ATCC 31267 / DSM 46492 / JCM 5070 / NBRC 14893 / NCIMB 12804 / NRRL 8165 / MA-4680).